The sequence spans 485 residues: MKLRDLIGNDAAIEPAVAALEVTGVALDSRVVRPGDLFFALAGSKTDGARFIDAAVAAGAVAIVGDHAPDGCKVPFIAVANPRRALALAAARFFPAQPATIAAVTGTSGKTSVAAFTRQIWERLGHASASIGTIGLVSPKRTVYGSLTTPDPIALHRQMDEIAREGVTHLAFEASSHGLDQYRLDGVRVSAGGFTNLSRDHMDYHPTVAHYLAAKLRLFRELVPPGGAAVISADHDCSAEAIDAAKARGLRVMAVGRNGDGAGEGIRLTEVGVDGFSQKLTVEHRGKRYVVLLPLAGEFQVENALVSAGLAIGTGSDAANVFASLEHLEGAKGRLERVGERNGAPIFVDYAHKPDALAKALQALRPYAKRRLVVVFGAGGDRDAGKRPIMGEIAAENADGVIITDDNPRSEQPEAIRAAILATAKGAREIGDRAAAIRAAIEELEQGDALLIAGKGHETGQIVGSEVLPFSDHEAVAAALASRVA.

Residues Leu-27 and Ser-29 each coordinate UDP-N-acetyl-alpha-D-muramoyl-L-alanyl-D-glutamate. 106–112 is a binding site for ATP; it reads GTSGKTS. UDP-N-acetyl-alpha-D-muramoyl-L-alanyl-D-glutamate contacts are provided by residues 148–149, Ser-175, Gln-181, and Arg-183; that span reads TT. At Lys-215 the chain carries N6-carboxylysine. Meso-2,6-diaminopimelate is bound by residues Arg-382, 406-409, Gly-454, and Glu-458; that span reads DNPR. The short motif at 406-409 is the Meso-diaminopimelate recognition motif element; the sequence is DNPR.

It belongs to the MurCDEF family. MurE subfamily. Mg(2+) is required as a cofactor. In terms of processing, carboxylation is probably crucial for Mg(2+) binding and, consequently, for the gamma-phosphate positioning of ATP.

It is found in the cytoplasm. It catalyses the reaction UDP-N-acetyl-alpha-D-muramoyl-L-alanyl-D-glutamate + meso-2,6-diaminopimelate + ATP = UDP-N-acetyl-alpha-D-muramoyl-L-alanyl-gamma-D-glutamyl-meso-2,6-diaminopimelate + ADP + phosphate + H(+). It functions in the pathway cell wall biogenesis; peptidoglycan biosynthesis. Functionally, catalyzes the addition of meso-diaminopimelic acid to the nucleotide precursor UDP-N-acetylmuramoyl-L-alanyl-D-glutamate (UMAG) in the biosynthesis of bacterial cell-wall peptidoglycan. The protein is UDP-N-acetylmuramoyl-L-alanyl-D-glutamate--2,6-diaminopimelate ligase of Bradyrhizobium diazoefficiens (strain JCM 10833 / BCRC 13528 / IAM 13628 / NBRC 14792 / USDA 110).